Reading from the N-terminus, the 246-residue chain is Ribosomal RNA small subunit methyltransferase G (246 aa).

S-adenosyl-L-methionine is bound by residues Gly-81, Phe-86, 137–138 (AE), and Arg-156. Residues 221–246 (LVLIRKERPTPKAYPRRAGVPAKSPL) form a disordered region.

The protein belongs to the methyltransferase superfamily. RNA methyltransferase RsmG family.

Its subcellular location is the cytoplasm. Functionally, specifically methylates the N7 position of a guanine in 16S rRNA. The polypeptide is Ribosomal RNA small subunit methyltransferase G (Symbiobacterium thermophilum (strain DSM 24528 / JCM 14929 / IAM 14863 / T)).